Here is a 248-residue protein sequence, read N- to C-terminus: Protein UL24 homolog (248 aa).

The segment at 194–248 (DRPRPTAQGHRPRTHVGPKPSQLTARVPRSARAGRAGGRKGQVGAVGQVCPGAQK) is disordered. Residues 218–227 (ARVPRSARAG) show a composition bias toward low complexity.

It belongs to the herpesviridae UL24 family.

The protein localises to the virion. It localises to the host cytoplasm. It is found in the host nucleus. The protein resides in the host nucleolus. Its subcellular location is the host Golgi apparatus. Its function is as follows. May participate in nuclear egress of viral particles. Plays a role in the dispersal of several host nucleolar proteins including NCL/nucleolin and NPM1. Since deletion of host NCL/nucleolin negatively impact on nuclear egress, UL24 supposedly acts on this process through its effect on host nucleoli. The polypeptide is Protein UL24 homolog (Homo sapiens (Human)).